A 258-amino-acid chain; its full sequence is Imidazole glycerol phosphate synthase subunit HisF (258 aa).

Residues aspartate 11 and aspartate 130 contribute to the active site.

The protein belongs to the HisA/HisF family. Heterodimer of HisH and HisF.

Its subcellular location is the cytoplasm. The enzyme catalyses 5-[(5-phospho-1-deoxy-D-ribulos-1-ylimino)methylamino]-1-(5-phospho-beta-D-ribosyl)imidazole-4-carboxamide + L-glutamine = D-erythro-1-(imidazol-4-yl)glycerol 3-phosphate + 5-amino-1-(5-phospho-beta-D-ribosyl)imidazole-4-carboxamide + L-glutamate + H(+). The protein operates within amino-acid biosynthesis; L-histidine biosynthesis; L-histidine from 5-phospho-alpha-D-ribose 1-diphosphate: step 5/9. Its function is as follows. IGPS catalyzes the conversion of PRFAR and glutamine to IGP, AICAR and glutamate. The HisF subunit catalyzes the cyclization activity that produces IGP and AICAR from PRFAR using the ammonia provided by the HisH subunit. This chain is Imidazole glycerol phosphate synthase subunit HisF, found in Haemophilus influenzae (strain 86-028NP).